Reading from the N-terminus, the 404-residue chain is Cysteine desulfurase IscS (404 aa).

Residues 75-76, Asn155, Gln183, and 203-205 contribute to the pyridoxal 5'-phosphate site; these read AT and SGH. At Lys206 the chain carries N6-(pyridoxal phosphate)lysine. Thr243 serves as a coordination point for pyridoxal 5'-phosphate. The active-site Cysteine persulfide intermediate is the Cys328. Cys328 serves as a coordination point for [2Fe-2S] cluster.

This sequence belongs to the class-V pyridoxal-phosphate-dependent aminotransferase family. NifS/IscS subfamily. Homodimer. Forms a heterotetramer with IscU, interacts with other sulfur acceptors. The cofactor is pyridoxal 5'-phosphate.

Its subcellular location is the cytoplasm. It catalyses the reaction (sulfur carrier)-H + L-cysteine = (sulfur carrier)-SH + L-alanine. The protein operates within cofactor biosynthesis; iron-sulfur cluster biosynthesis. Its function is as follows. Master enzyme that delivers sulfur to a number of partners involved in Fe-S cluster assembly, tRNA modification or cofactor biosynthesis. Catalyzes the removal of elemental sulfur atoms from cysteine to produce alanine. Functions as a sulfur delivery protein for Fe-S cluster synthesis onto IscU, an Fe-S scaffold assembly protein, as well as other S acceptor proteins. This Shewanella pealeana (strain ATCC 700345 / ANG-SQ1) protein is Cysteine desulfurase IscS.